The sequence spans 116 residues: Ribosome-binding factor A (116 aa).

The protein belongs to the RbfA family. Monomer. Binds 30S ribosomal subunits, but not 50S ribosomal subunits or 70S ribosomes.

The protein localises to the cytoplasm. In terms of biological role, one of several proteins that assist in the late maturation steps of the functional core of the 30S ribosomal subunit. Associates with free 30S ribosomal subunits (but not with 30S subunits that are part of 70S ribosomes or polysomes). Required for efficient processing of 16S rRNA. May interact with the 5'-terminal helix region of 16S rRNA. The polypeptide is Ribosome-binding factor A (Streptococcus pyogenes serotype M28 (strain MGAS6180)).